Reading from the N-terminus, the 582-residue chain is Hemagglutinin-neuraminidase (582 aa).

Over 1-34 (MEPSKLFTISDNATFAPGPVNNAADKKTFRTCFR) the chain is Intravirion. A helical; Signal-anchor for type II membrane protein transmembrane segment spans residues 35 to 55 (ILVLSVQAVTLILVIVTLGEL). Residues 56 to 582 (VRMINDQGLS…LPVLTRLTIT (527 aa)) lie on the Virion surface side of the membrane. An N-linked (GlcNAc...) asparagine; by host glycan is attached at asparagine 127. 3 disulfides stabilise this stretch: cysteine 178–cysteine 202, cysteine 192–cysteine 253, and cysteine 244–cysteine 257. Positions 240–245 (NRKSCS) are involved in neuraminidase activity. N-linked (GlcNAc...) asparagine; by host glycosylation is found at asparagine 284 and asparagine 329. 3 disulfides stabilise this stretch: cysteine 350/cysteine 471, cysteine 382/cysteine 392, and cysteine 465/cysteine 475. 2 N-linked (GlcNAc...) asparagine; by host glycosylation sites follow: asparagine 400 and asparagine 448. An N-linked (GlcNAc...) asparagine; by host glycan is attached at asparagine 507. Cysteine 545 and cysteine 556 form a disulfide bridge.

The protein belongs to the paramyxoviruses hemagglutinin-neuraminidase family. As to quaternary structure, homotetramer; composed of disulfide-linked homodimers. Interacts with F protein trimer.

Its subcellular location is the virion membrane. The protein resides in the host cell membrane. The enzyme catalyses Hydrolysis of alpha-(2-&gt;3)-, alpha-(2-&gt;6)-, alpha-(2-&gt;8)- glycosidic linkages of terminal sialic acid residues in oligosaccharides, glycoproteins, glycolipids, colominic acid and synthetic substrates.. Functionally, attaches the virus to alpha-2,3-linked sialic acid-containing cell receptors and thereby initiating infection. Binding of HN protein to the receptor induces a conformational change that allows the F protein to trigger virion/cell membranes fusion. Binds to the glycan motifs sialyl Lewis (SLe) and GM2 ganglioside (GM2-glycan). Neuraminidase activity ensures the efficient spread of the virus by dissociating the mature virions from the neuraminic acid containing glycoproteins. This chain is Hemagglutinin-neuraminidase (HN), found in Mumps virus (strain RW) (MuV).